Consider the following 179-residue polypeptide: Probable chemoreceptor glutamine deamidase CheD 2 (179 aa).

The protein belongs to the CheD family.

It catalyses the reaction L-glutaminyl-[protein] + H2O = L-glutamyl-[protein] + NH4(+). In terms of biological role, probably deamidates glutamine residues to glutamate on methyl-accepting chemotaxis receptors (MCPs), playing an important role in chemotaxis. This is Probable chemoreceptor glutamine deamidase CheD 2 from Ruegeria sp. (strain TM1040) (Silicibacter sp.).